Here is a 371-residue protein sequence, read N- to C-terminus: Histidinol-phosphate aminotransferase (371 aa).

Residue Lys228 is modified to N6-(pyridoxal phosphate)lysine.

The protein belongs to the class-II pyridoxal-phosphate-dependent aminotransferase family. Histidinol-phosphate aminotransferase subfamily. In terms of assembly, homodimer. The cofactor is pyridoxal 5'-phosphate.

The enzyme catalyses L-histidinol phosphate + 2-oxoglutarate = 3-(imidazol-4-yl)-2-oxopropyl phosphate + L-glutamate. Its pathway is amino-acid biosynthesis; L-histidine biosynthesis; L-histidine from 5-phospho-alpha-D-ribose 1-diphosphate: step 7/9. The sequence is that of Histidinol-phosphate aminotransferase from Thermosynechococcus vestitus (strain NIES-2133 / IAM M-273 / BP-1).